Here is a 388-residue protein sequence, read N- to C-terminus: Zinc finger protein ubi-d4 A (388 aa).

Residues 60 to 190 (GPGSAPGQLY…AKGKGIGSAR (131 aa)) are disordered. 2 stretches are compositionally biased toward basic and acidic residues: residues 97-107 (PDPEQMLKKEG) and 123-137 (DPIEKRIMPDSRDDD). A compositionally biased stretch (acidic residues) spans 156 to 170 (PDDFLDDLDDEDYEE). Residues 205–228 (YACDICGKRYKNRPGLSYHYAHSH) form a C2H2-type zinc finger. The disordered stretch occupies residues 233 to 264 (EGAGAEDKEDSQPPTPIMHRPEEQKSKKGPDG). Over residues 251–262 (HRPEEQKSKKGP) the composition is skewed to basic and acidic residues. PHD-type zinc fingers lie at residues 269–329 (NNYC…CKCC) and 326–376 (CKCC…CLDL).

It belongs to the requiem/DPF family.

It is found in the cytoplasm. It localises to the nucleus. In terms of biological role, may be a transcription factor required for the apoptosis response following survival factor withdrawal from myeloid cells. Might also have a role in the development and maturation of lymphoid cells. This chain is Zinc finger protein ubi-d4 A (req-a), found in Xenopus laevis (African clawed frog).